We begin with the raw amino-acid sequence, 219 residues long: Germin-like protein subfamily 2 member 1 (219 aa).

Residues 1–21 form the signal peptide; sequence MASPTLTLLLLLTTVSFFISS. C32 and C47 form a disulfide bridge. The Cupin type-1 domain maps to 61-209; sequence QGLAKPGLTN…AFQTSPGTVK (149 aa). An N-linked (GlcNAc...) asparagine glycan is attached at N70. Residues H109, H111, E116, and H155 each contribute to the Mn(2+) site.

Belongs to the germin family. Oligomer (believed to be a pentamer but probably hexamer).

Its subcellular location is the secreted. The protein resides in the extracellular space. The protein localises to the apoplast. May play a role in plant defense. Probably has no oxalate oxidase activity even if the active site is conserved. The polypeptide is Germin-like protein subfamily 2 member 1 (GLP4) (Arabidopsis thaliana (Mouse-ear cress)).